Reading from the N-terminus, the 495-residue chain is UDP-glycosyltransferase 73C9 (495 aa).

23-26 (GHMI) contributes to the UDP-alpha-D-glucose binding site. The active-site Proton acceptor is the H24. The active-site Charge relay is D129. Residues 355–358 (WSPQ), 373–381 (HCGWNSTLE), and 397–398 (DQ) contribute to the UDP-alpha-D-glucose site.

This sequence belongs to the UDP-glycosyltransferase family.

In terms of biological role, possesses very weak glucosyltransferase activity toward 2,4,5-trichlorophenol (TCP), when assayed with high concentrations of TCP. This is UDP-glycosyltransferase 73C9 from Barbarea vulgaris (Yellow rocket).